Consider the following 329-residue polypeptide: Ribosomal RNA small subunit methyltransferase H (329 aa).

S-adenosyl-L-methionine contacts are provided by residues 46 to 48, Asp-65, Phe-92, Asp-113, and His-120; that span reads GGH. The disordered stretch occupies residues 295 to 329; that stretch reads RGAERPSPAEVAANPRAASARLRAAEKIRDTREAA. The segment covering 317–329 has biased composition (basic and acidic residues); it reads RAAEKIRDTREAA.

Belongs to the methyltransferase superfamily. RsmH family.

It is found in the cytoplasm. It catalyses the reaction cytidine(1402) in 16S rRNA + S-adenosyl-L-methionine = N(4)-methylcytidine(1402) in 16S rRNA + S-adenosyl-L-homocysteine + H(+). In terms of biological role, specifically methylates the N4 position of cytidine in position 1402 (C1402) of 16S rRNA. In Acidothermus cellulolyticus (strain ATCC 43068 / DSM 8971 / 11B), this protein is Ribosomal RNA small subunit methyltransferase H.